A 124-amino-acid polypeptide reads, in one-letter code: Acidic phospholipase A2 (124 aa).

Cystine bridges form between C26–C116, C28–C44, C43–C95, C49–C124, C50–C88, C57–C81, and C75–C86. Positions 27, 29, and 31 each coordinate Ca(2+). The active site involves H47. Position 48 (D48) interacts with Ca(2+). Residue D89 is part of the active site.

The protein belongs to the phospholipase A2 family. Group II subfamily. D49 sub-subfamily. Monomer. It depends on Ca(2+) as a cofactor. As to expression, expressed by the venom gland.

Its subcellular location is the secreted. The catalysed reaction is a 1,2-diacyl-sn-glycero-3-phosphocholine + H2O = a 1-acyl-sn-glycero-3-phosphocholine + a fatty acid + H(+). Its function is as follows. Snake venom phospholipase A2 (PLA2) that acts in vivo as an anti-thrombotic agent. Inhibits platelet aggregation induced by ADP, arachidonic acid, and thrombin. PLA2 catalyzes the calcium-dependent hydrolysis of the 2-acyl groups in 3-sn-phosphoglycerides. This chain is Acidic phospholipase A2, found in Gloydius halys (Chinese water mocassin).